Here is a 458-residue protein sequence, read N- to C-terminus: ATP synthase subunit beta (458 aa).

148-155 (GGAGVGKT) contacts ATP.

Belongs to the ATPase alpha/beta chains family. In terms of assembly, F-type ATPases have 2 components, CF(1) - the catalytic core - and CF(0) - the membrane proton channel. CF(1) has five subunits: alpha(3), beta(3), gamma(1), delta(1), epsilon(1). CF(0) has three main subunits: a(1), b(2) and c(9-12). The alpha and beta chains form an alternating ring which encloses part of the gamma chain. CF(1) is attached to CF(0) by a central stalk formed by the gamma and epsilon chains, while a peripheral stalk is formed by the delta and b chains.

Its subcellular location is the cell inner membrane. The catalysed reaction is ATP + H2O + 4 H(+)(in) = ADP + phosphate + 5 H(+)(out). Its function is as follows. Produces ATP from ADP in the presence of a proton gradient across the membrane. The catalytic sites are hosted primarily by the beta subunits. The protein is ATP synthase subunit beta of Pseudomonas aeruginosa (strain LESB58).